The sequence spans 235 residues: Urease accessory protein UreF (235 aa).

This sequence belongs to the UreF family. As to quaternary structure, ureD, UreF and UreG form a complex that acts as a GTP-hydrolysis-dependent molecular chaperone, activating the urease apoprotein by helping to assemble the nickel containing metallocenter of UreC. The UreE protein probably delivers the nickel.

The protein resides in the cytoplasm. In terms of biological role, required for maturation of urease via the functional incorporation of the urease nickel metallocenter. This is Urease accessory protein UreF from Haemophilus influenzae (strain ATCC 51907 / DSM 11121 / KW20 / Rd).